We begin with the raw amino-acid sequence, 617 residues long: Protein 4.1 (617 aa).

Positions 1 to 282 constitute an FERM domain; it reads MHCKVSLLDD…EHHTFFRLTS (282 aa). Phosphotyrosine is present on Y13. A Phosphothreonine modification is found at T169. The tract at residues 308–401 is disordered; the sequence is TRQASALIDR…AEPEPSEAWK (94 aa). A phosphoserine mark is found at S312, S331, and S333. Positions 348–361 are enriched in low complexity; the sequence is RPTSAPAIAPSPAA. A compositionally biased stretch (acidic residues) spans 387–396; it reads APPEDAEPEP. The spectrin--actin-binding stretch occupies residues 401–466; the sequence is KKKRERLDGE…WDKRLSTHSP (66 aa). Y413 is modified (phosphotyrosine; by EGFR). 4 positions are modified to phosphoserine: S417, S427, S437, and S462. S465 is modified (phosphoserine; by CDK1). A C-terminal (CTD) region spans residues 467–617; it reads FRTLNINGQI…VHQETEISEE (151 aa). Residues T489 and T612 each carry the phosphothreonine modification.

As to quaternary structure, binds with a high affinity to glycophorin and with lower affinity to band III protein. Associates with the nuclear mitotic apparatus. Binds calmodulin, CPAP and DLG1. Also found to associate with contractile apparatus and tight junctions. Interacts with NUMA1; this interaction is negatively regulated by CDK1 during metaphase and promotes anaphase-specific localization of NUMA1 in symmetrically dividing cells. Interacts with ATP2B1; regulates small intestinal calcium absorption through regulation of membrane expression of ATP2B1. In terms of processing, phosphorylated at multiple sites by different protein kinases and each phosphorylation event selectively modulates the protein's functions. Post-translationally, phosphorylation on Tyr-413 reduces the ability of 4.1 to promote the assembly of the spectrin/actin/4.1 ternary complex.

It is found in the nucleus. Its subcellular location is the cytoplasm. The protein localises to the cytoskeleton. It localises to the cell cortex. Functionally, protein 4.1 is a major structural element of the erythrocyte membrane skeleton. It plays a key role in regulating membrane physical properties of mechanical stability and deformability by stabilizing spectrin-actin interaction. Recruits DLG1 to membranes. Required for dynein-dynactin complex and NUMA1 recruitment at the mitotic cell cortex during anaphase. The sequence is that of Protein 4.1 from Bos taurus (Bovine).